Here is a 27-residue protein sequence, read N- to C-terminus: uncharacterized protein (27 aa).

It is found in the plastid. It localises to the chloroplast. This is an uncharacterized protein from Trieres chinensis (Marine centric diatom).